A 376-amino-acid chain; its full sequence is Erythronate-4-phosphate dehydrogenase (376 aa).

Substrate-binding residues include serine 45 and threonine 67. NAD(+)-binding positions include glutamine 127–valine 128, aspartate 147, and threonine 176. Arginine 209 is an active-site residue. Aspartate 233 is a binding site for NAD(+). Glutamate 238 is a catalytic residue. Histidine 255 functions as the Proton donor in the catalytic mechanism. Residue glycine 258 participates in NAD(+) binding. Tyrosine 259 is a binding site for substrate.

The protein belongs to the D-isomer specific 2-hydroxyacid dehydrogenase family. PdxB subfamily. As to quaternary structure, homodimer.

Its subcellular location is the cytoplasm. It carries out the reaction 4-phospho-D-erythronate + NAD(+) = (R)-3-hydroxy-2-oxo-4-phosphooxybutanoate + NADH + H(+). It functions in the pathway cofactor biosynthesis; pyridoxine 5'-phosphate biosynthesis; pyridoxine 5'-phosphate from D-erythrose 4-phosphate: step 2/5. Catalyzes the oxidation of erythronate-4-phosphate to 3-hydroxy-2-oxo-4-phosphonooxybutanoate. This Aliivibrio fischeri (strain ATCC 700601 / ES114) (Vibrio fischeri) protein is Erythronate-4-phosphate dehydrogenase.